Here is a 987-residue protein sequence, read N- to C-terminus: Rho GTPase-activating protein 6 (987 aa).

Polar residues predominate over residues 1-21 (MSAQSLLHSVFSCSSPASGGT). 3 disordered regions span residues 1 to 60 (MSAQ…RGST), 76 to 117 (SRLA…SGSF), and 144 to 170 (GSGSASSRSPASILSSSGGGPNGIFSS). Phosphoserine is present on serine 37. Over residues 44 to 57 (GGCGSEMGAEGGLR) the composition is skewed to gly residues. A compositionally biased stretch (polar residues) spans 100-115 (SSFSTPSTPQEKSPSG). Residues 144–159 (GSGSASSRSPASILSS) are compositionally biased toward low complexity. Serine 265 bears the Phosphoserine mark. The tract at residues 324–363 (KQNKELSSSNSSLSSTSETPNESTSPNTPEPAPRARRRGA) is disordered. Positions 328 to 350 (ELSSSNSSLSSTSETPNESTSPN) are enriched in low complexity. The SH3-binding signature appears at 344-354 (NESTSPNTPEP). At serine 365 the chain carries Phosphoserine. The region spanning 403–604 (LSLNPIYRQV…KMIENYEALF (202 aa)) is the Rho-GAP domain. The tract at residues 641 to 676 (DILQTEVSFSMGGRHSSTDSNKASSGDISPYDNNSP) is disordered. Positions 658–676 (TDSNKASSGDISPYDNNSP) are enriched in polar residues. Phosphoserine is present on residues serine 669, serine 675, serine 682, serine 713, serine 758, serine 776, serine 781, serine 790, and serine 824. Residues 709-731 (GHLSSPKSKSRESSPGPRLGKEM) are disordered. 2 disordered regions span residues 825–847 (TPHIQDGSRGTRRPAASSDPFLS) and 863–953 (WLQS…QDKQ). Positions 939–948 (LSSAYSLSAS) are enriched in low complexity. Phosphoserine is present on residues serine 941 and serine 944.

As to expression, expressed in retina and lung.

It localises to the cytoplasm. GTPase activator for the Rho-type GTPases by converting them to an inactive GDP-bound state. Could regulate the interactions of signaling molecules with the actin cytoskeleton. Promotes continuous elongation of cytoplasmic processes during cell motility and simultaneous retraction of the cell body changing the cell morphology. The protein is Rho GTPase-activating protein 6 (Arhgap6) of Mus musculus (Mouse).